The sequence spans 423 residues: MDRSLELFQIAKNLFPGGVNSPIRAAVKPYPFYVKKASGATLVTVDGVELIDYVLGYGPLILGHMHPKVLEAVEEQLNRGWLYGTPHELEIELAKKIVSHYPSIDMVRFVNSGTEATMTAIRLARGFTKKNKIIKFDGCYHGAHDSVLVKAGSAVSHFGVPGSAGVPEEVSKLTLVVPFNDVEAVEKVAKENQDDLAAIIVEPVMGNAGVIPPKEGFLKELRRIADETGALLIFDEVITGYRLGLGGAQAKFGVVPDLTTLGKIVGGGFPVGVVGGKREIMEYLTPSGPVFNAGTFNAHPVTMAAGLATINELERGYVYEVANSAAEKVAKALEQEAVAKFGGVVHRVASMFQWFPGVEEVNNYADALKANKEISLRLHEELLKRGVFIAPSLFEAWFTSAAHGEDVVNKTLEALSEALKVIS.

An N6-(pyridoxal phosphate)lysine modification is found at Lys263.

It belongs to the class-III pyridoxal-phosphate-dependent aminotransferase family. HemL subfamily. Requires pyridoxal 5'-phosphate as cofactor.

It localises to the cytoplasm. The catalysed reaction is (S)-4-amino-5-oxopentanoate = 5-aminolevulinate. It functions in the pathway porphyrin-containing compound metabolism; protoporphyrin-IX biosynthesis; 5-aminolevulinate from L-glutamyl-tRNA(Glu): step 2/2. The protein is Glutamate-1-semialdehyde 2,1-aminomutase of Ignicoccus hospitalis (strain KIN4/I / DSM 18386 / JCM 14125).